Consider the following 279-residue polypeptide: Thymidylate synthase (279 aa).

Residue 132 to 133 coordinates dUMP; sequence RR. Cysteine 153 acts as the Nucleophile in catalysis. DUMP is bound by residues 178 to 181, asparagine 189, and 219 to 221; these read RSND and HIY. Aspartate 181 provides a ligand contact to (6R)-5,10-methylene-5,6,7,8-tetrahydrofolate. Residue alanine 278 coordinates (6R)-5,10-methylene-5,6,7,8-tetrahydrofolate.

It belongs to the thymidylate synthase family. Bacterial-type ThyA subfamily. In terms of assembly, homodimer.

The protein resides in the cytoplasm. It carries out the reaction dUMP + (6R)-5,10-methylene-5,6,7,8-tetrahydrofolate = 7,8-dihydrofolate + dTMP. It functions in the pathway pyrimidine metabolism; dTTP biosynthesis. Catalyzes the reductive methylation of 2'-deoxyuridine-5'-monophosphate (dUMP) to 2'-deoxythymidine-5'-monophosphate (dTMP) while utilizing 5,10-methylenetetrahydrofolate (mTHF) as the methyl donor and reductant in the reaction, yielding dihydrofolate (DHF) as a by-product. This enzymatic reaction provides an intracellular de novo source of dTMP, an essential precursor for DNA biosynthesis. This chain is Thymidylate synthase, found in Lactococcus lactis subsp. lactis (strain IL1403) (Streptococcus lactis).